The primary structure comprises 211 residues: MAIGVIGRKCGMTRVFTEEGVSVPVTVIEVGPNRVSQVKTEESDGYQAVQVTVGERRASRVTKAQAGHFAKAGVEAGRGVWEFRAEAGEFEAGSSVTVEGFEAGQMIDVTGTSKGKGFAGGVKRWNFSTQDATHGNSLSHRAPGSIGQNQTPGRVFKGKKMAGHLGAERVTVQNLEVVRVDADKNLLLVKGAVPGATGGDVIVRLAVKAKA.

A compositionally biased stretch (polar residues) spans 130–139; the sequence is QDATHGNSLS. The disordered stretch occupies residues 130–151; that stretch reads QDATHGNSLSHRAPGSIGQNQT. At glutamine 150 the chain carries N5-methylglutamine.

This sequence belongs to the universal ribosomal protein uL3 family. Part of the 50S ribosomal subunit. Forms a cluster with proteins L14 and L19. In terms of processing, methylated by PrmB.

Functionally, one of the primary rRNA binding proteins, it binds directly near the 3'-end of the 23S rRNA, where it nucleates assembly of the 50S subunit. This Alcanivorax borkumensis (strain ATCC 700651 / DSM 11573 / NCIMB 13689 / SK2) protein is Large ribosomal subunit protein uL3.